Reading from the N-terminus, the 296-residue chain is Haloalkane dehalogenase (296 aa).

One can recognise an AB hydrolase-1 domain in the interval 31-155; sequence PILFQHGNPT…QDRDLFQAFR (125 aa). Asn-38 lines the chloride pocket. Asp-108 serves as the catalytic Nucleophile. Trp-109 serves as a coordination point for chloride. Glu-132 functions as the Proton donor in the catalytic mechanism. The active-site Proton acceptor is the His-272.

Belongs to the haloalkane dehalogenase family. Type 2 subfamily. Monomer.

It is found in the periplasm. The enzyme catalyses 1-haloalkane + H2O = a halide anion + a primary alcohol + H(+). It catalyses the reaction (3R,6R)-1,3,4,6-tetrachlorocyclohexa-1,4-diene + 2 H2O = 2,5-dichlorocyclohexa-2,5-dien-1,4-diol + 2 chloride + 2 H(+). It participates in xenobiotic degradation; gamma-hexachlorocyclohexane degradation. With respect to regulation, competitively inhibited by the key pollutants 1,2-dichloroethane (1,2-DCE) and 1,2-dichloropropane (1,2-DCP). Functionally, catalyzes hydrolytic cleavage of carbon-halogen bonds in halogenated aliphatic compounds, leading to the formation of the corresponding primary alcohols, halide ions and protons. Has a broad substrate specificity since not only monochloroalkanes (C3 to C10) but also dichloroalkanes (&gt; C3), bromoalkanes, and chlorinated aliphatic alcohols are good substrates. Shows almost no activity with 1,2-dichloroethane, but very high activity with the brominated analog. Is involved in the degradation of the important environmental pollutant gamma-hexachlorocyclohexane (gamma-HCH or lindane) as it also catalyzes conversion of 1,3,4,6-tetrachloro-1,4-cyclohexadiene (1,4-TCDN) to 2,5-dichloro-2,5-cyclohexadiene-1,4-diol (2,5-DDOL) via the intermediate 2,4,5-trichloro-2,5-cyclohexadiene-1-ol (2,4,5-DNOL). This degradation pathway allows S.japonicum UT26 to grow on gamma-HCH as the sole source of carbon and energy. The protein is Haloalkane dehalogenase of Sphingobium indicum (strain DSM 16413 / CCM 7287 / MTCC 6362 / UT26 / NBRC 101211 / UT26S) (Sphingobium japonicum).